The chain runs to 201 residues: Ubiquitin-conjugating enzyme E2 E2 (201 aa).

Residues M1–D10 show a composition bias toward basic and acidic residues. Residues M1–T55 form a disordered region. An N-acetylserine modification is found at S2. A phosphoserine mark is found at S11, S15, S18, and S19. A compositionally biased stretch (basic and acidic residues) spans G21–I45. Residues S46–T55 are compositionally biased toward low complexity. A UBC core domain is found at T55–T201. Residue C139 is the Glycyl thioester intermediate of the active site.

The protein belongs to the ubiquitin-conjugating enzyme family. Post-translationally, autoubiquitinated.

The enzyme catalyses S-ubiquitinyl-[E1 ubiquitin-activating enzyme]-L-cysteine + [E2 ubiquitin-conjugating enzyme]-L-cysteine = [E1 ubiquitin-activating enzyme]-L-cysteine + S-ubiquitinyl-[E2 ubiquitin-conjugating enzyme]-L-cysteine.. The protein operates within protein modification; protein ubiquitination. Its function is as follows. Accepts ubiquitin from the E1 complex and catalyzes its covalent attachment to other proteins. In vitro catalyzes 'Lys-11'- and 'Lys-48'-, as well as 'Lys-63'-linked polyubiquitination. Catalyzes the ISGylation of influenza A virus NS1 protein. In Mus musculus (Mouse), this protein is Ubiquitin-conjugating enzyme E2 E2 (Ube2e2).